Reading from the N-terminus, the 198-residue chain is Mediator of RNA polymerase II transcription subunit 22 (198 aa).

The tract at residues 159-198 (WGSPEMTSDPSHANHEVSDHLGSQESMQRHRNGSGTSEQS) is disordered.

This sequence belongs to the Mediator complex subunit 22 family. In terms of assembly, component of the Mediator complex.

Its subcellular location is the nucleus. Functionally, component of the Mediator complex, a coactivator involved in the regulated transcription of nearly all RNA polymerase II-dependent genes. Mediator functions as a bridge to convey information from gene-specific regulatory proteins to the basal RNA polymerase II transcription machinery. Mediator is recruited to promoters by direct interactions with regulatory proteins and serves as a scaffold for the assembly of a functional preinitiation complex with RNA polymerase II and the general transcription factors. The sequence is that of Mediator of RNA polymerase II transcription subunit 22 (med22) from Danio rerio (Zebrafish).